Reading from the N-terminus, the 66-residue chain is Neurotoxin BmK AGP-SYPU1 (66 aa).

Residues 2–64 (RDAYIAQNYN…KPIRIPGKCH (63 aa)) form the LCN-type CS-alpha/beta domain. Intrachain disulfides connect cysteine 12–cysteine 63, cysteine 16–cysteine 36, cysteine 22–cysteine 46, and cysteine 26–cysteine 48. The propeptide at 65–66 (RR) is removed by a carboxypeptidase.

Expressed by the venom gland.

It is found in the secreted. Its function is as follows. Alpha toxins bind voltage-independently at site-3 of sodium channels (Nav) and inhibit the inactivation of the activated channels, thereby blocking neuronal transmission. This toxin has a strong analgesic effect when administered to mice by intraperitoneal injection. The sequence is that of Neurotoxin BmK AGP-SYPU1 from Olivierus martensii (Manchurian scorpion).